We begin with the raw amino-acid sequence, 78 residues long: Small ribosomal subunit protein bS18 (78 aa).

This sequence belongs to the bacterial ribosomal protein bS18 family. As to quaternary structure, part of the 30S ribosomal subunit. Forms a tight heterodimer with protein bS6.

Functionally, binds as a heterodimer with protein bS6 to the central domain of the 16S rRNA, where it helps stabilize the platform of the 30S subunit. This Kocuria rhizophila (strain ATCC 9341 / DSM 348 / NBRC 103217 / DC2201) protein is Small ribosomal subunit protein bS18.